The following is a 122-amino-acid chain: Small ribosomal subunit protein uS8c (122 aa).

The protein belongs to the universal ribosomal protein uS8 family. As to quaternary structure, part of the 30S ribosomal subunit.

It is found in the plastid. It localises to the chloroplast. One of the primary rRNA binding proteins, it binds directly to 16S rRNA central domain where it helps coordinate assembly of the platform of the 30S subunit. The chain is Small ribosomal subunit protein uS8c (rps8) from Ostreococcus tauri.